Here is a 164-residue protein sequence, read N- to C-terminus: Lipoprotein signal peptidase (164 aa).

3 consecutive transmembrane segments (helical) span residues 12-32 (FLWL…WIVA), 70-90 (WLFT…LKET), and 93-113 (QQVM…GNVF). Residues Asp-123 and Asp-141 contribute to the active site. The helical transmembrane segment at 133–153 (YWPAFNVADSAICLGAFLLVI) threads the bilayer.

It belongs to the peptidase A8 family.

The protein localises to the cell inner membrane. The catalysed reaction is Release of signal peptides from bacterial membrane prolipoproteins. Hydrolyzes -Xaa-Yaa-Zaa-|-(S,diacylglyceryl)Cys-, in which Xaa is hydrophobic (preferably Leu), and Yaa (Ala or Ser) and Zaa (Gly or Ala) have small, neutral side chains.. Its pathway is protein modification; lipoprotein biosynthesis (signal peptide cleavage). Functionally, this protein specifically catalyzes the removal of signal peptides from prolipoproteins. The chain is Lipoprotein signal peptidase from Pseudoalteromonas atlantica (strain T6c / ATCC BAA-1087).